The primary structure comprises 340 residues: MATIKDVAKLVGVSTTTVSHVINKTRFVAEDTTKAVWEAIASLNYSPSAVARSLKVNTTKSIGMIITTSEAPYFAEIVLAVEEYCYRQGYSLFLCNTQNDAEKVQNHLDMLIKKRVDGILVMCSEYTENSLALFNGTNVPMVVMDWGPNDGKSDRIIDHCLDGGYMATKHLIDNGHRDIAIIAGYLYKTTAKARYDGFVKAMTEAGLLIRKEWIFENDFQPEGGYESMNNLLNQDKLPTAVICGCDAMALGVISAITEKGLSVPQDISVIGYDNIHSSRFYAPPLTTIHQSKTRLGQMAIDTLLERIQQHNEQPSEPVTPKVLEFYPELVVRSSVRNLNQ.

Positions 2-56 constitute an HTH lacI-type domain; the sequence is ATIKDVAKLVGVSTTTVSHVINKTRFVAEDTTKAVWEAIASLNYSPSAVARSLKV. Residues 4-23 constitute a DNA-binding region (H-T-H motif); the sequence is IKDVAKLVGVSTTTVSHVIN. The DNA-binding element occupies 48-56; the sequence is SAVARSLKV. Residues Tyr73, Lys188, Thr190, Phe219, and Asp273 each contribute to the hypoxanthine site.

As to quaternary structure, homodimer.

It participates in purine metabolism; purine nucleotide biosynthesis [regulation]. Its function is as follows. Is the main repressor of the genes involved in the de novo synthesis of purine nucleotides, regulating purB, purC, purEK, purF, purHD, purL, purMN and guaBA expression. PurR is allosterically activated to bind its cognate DNA by binding the purine corepressors, hypoxanthine or guanine, thereby effecting transcription repression. The polypeptide is HTH-type transcriptional repressor PurR (Glaesserella parasuis serovar 5 (strain SH0165) (Haemophilus parasuis)).